A 401-amino-acid chain; its full sequence is Formate-dependent phosphoribosylglycinamide formyltransferase (401 aa).

N(1)-(5-phospho-beta-D-ribosyl)glycinamide-binding positions include 27-28 (EL) and E87. Residues R119, K160, 165–170 (SSGKGQ), 200–203 (EELV), and E208 contribute to the ATP site. In terms of domain architecture, ATP-grasp spans 124–313 (EFAAEEVGVT…QFDLHLRAIL (190 aa)). Mg(2+) contacts are provided by E272 and E284. Residues D291, K361, and 368 to 369 (RR) contribute to the N(1)-(5-phospho-beta-D-ribosyl)glycinamide site.

This sequence belongs to the PurK/PurT family. In terms of assembly, homodimer.

The enzyme catalyses N(1)-(5-phospho-beta-D-ribosyl)glycinamide + formate + ATP = N(2)-formyl-N(1)-(5-phospho-beta-D-ribosyl)glycinamide + ADP + phosphate + H(+). Its pathway is purine metabolism; IMP biosynthesis via de novo pathway; N(2)-formyl-N(1)-(5-phospho-D-ribosyl)glycinamide from N(1)-(5-phospho-D-ribosyl)glycinamide (formate route): step 1/1. Its function is as follows. Involved in the de novo purine biosynthesis. Catalyzes the transfer of formate to 5-phospho-ribosyl-glycinamide (GAR), producing 5-phospho-ribosyl-N-formylglycinamide (FGAR). Formate is provided by PurU via hydrolysis of 10-formyl-tetrahydrofolate. This is Formate-dependent phosphoribosylglycinamide formyltransferase from Haloquadratum walsbyi (strain DSM 16790 / HBSQ001).